The sequence spans 24 residues: Ascaphin-4 (24 aa).

In terms of tissue distribution, expressed by the skin glands.

Its subcellular location is the secreted. In terms of biological role, antimicrobial peptide that shows higher potency against Gram-negative bacteria than against Gram-positive bacteria. Has a very week hemolytic activity. In Ascaphus truei (Coastal tailed frog), this protein is Ascaphin-4.